Consider the following 225-residue polypeptide: Probable CDP-diacylglycerol--inositol 3-phosphatidyltransferase 2 (225 aa).

2 helical membrane passes run 6–26 (PATL…RVLL) and 29–49 (IAFS…FFSF). Positions 52 and 55 each coordinate Mg(2+). Positions 56, 60, and 66 each coordinate a CDP-1,2-diacyl-sn-glycerol. Mg(2+) contacts are provided by D73 and D77. D77 (proton acceptor) is an active-site residue. A run of 3 helical transmembrane segments spans residues 84 to 104 (LLVI…LLAL), 143 to 163 (MFMG…LLIA), and 184 to 204 (LSLL…INVI).

This sequence belongs to the CDP-alcohol phosphatidyltransferase class-I family. Mg(2+) is required as a cofactor. Mn(2+) serves as cofactor.

The protein localises to the membrane. It catalyses the reaction a CDP-1,2-diacyl-sn-glycerol + myo-inositol = a 1,2-diacyl-sn-glycero-3-phospho-(1D-myo-inositol) + CMP + H(+). Catalyzes the biosynthesis of phosphatidylinositol (PtdIns) as well as PtdIns:inositol exchange reaction. May thus act to reduce an excessive cellular PtdIns content. The exchange activity is due to the reverse reaction of PtdIns synthase and is dependent on CMP, which is tightly bound to the enzyme. The sequence is that of Probable CDP-diacylglycerol--inositol 3-phosphatidyltransferase 2 (PIS2) from Arabidopsis thaliana (Mouse-ear cress).